Reading from the N-terminus, the 785-residue chain is Transcription factor Sp1 (785 aa).

Residues 1 to 93 (MSDQDHSMDE…PSQSGGTGEL (93 aa)) form a disordered region. An N-acetylserine modification is found at Ser-2. 2 positions are modified to phosphoserine: Ser-2 and Ser-7. The segment at 2–82 (SDQDHSMDEM…SPNENSNNSQ (81 aa)) is repressor domain. A Glycyl lysine isopeptide (Lys-Gly) (interchain with G-Cter in SUMO); alternate cross-link involves residue Lys-16. Residue Lys-16 forms a Glycyl lysine isopeptide (Lys-Gly) (interchain with G-Cter in SUMO2); alternate linkage. Residues 20-34 (GVGGNNGGNGNGGGA) are compositionally biased toward gly residues. A Phosphoserine modification is found at Ser-59. The span at 72–85 (ESPNENSNNSQGPS) shows a compositional bias: low complexity. At Ser-101 the chain carries Phosphoserine; by ATM. Residues 109–123 (IISSSSGATPTSKEQ) are compositionally biased toward polar residues. The segment at 109-141 (IISSSSGATPTSKEQSGSSTNGSNGSESSKNRT) is disordered. Residues 124-136 (SGSSTNGSNGSES) are compositionally biased toward low complexity. The transactivation domain A (Gln-rich) stretch occupies residues 146–251 (QYVVAAAPNL…ANNVLSGQTQ (106 aa)). Positions 261–495 (NGNITLLPVN…PMQGVSLGQT (235 aa)) are transactivation domain B (Gln-rich). The residue at position 278 (Thr-278) is a Phosphothreonine; by MAPK8. A disordered region spans residues 329-395 (TTTTTSNMGI…KEGEQNQQTQ (67 aa)). Over residues 342–357 (TTSGSSGTNSQGQTPQ) the composition is skewed to low complexity. The span at 358–379 (RVSGLQGSDALNIQQNQTSGGS) shows a compositional bias: polar residues. A compositionally biased stretch (low complexity) spans 381-395 (QAGQQKEGEQNQQTQ). Position 453 is a phosphothreonine; by MAPK1 and MAPK3 (Thr-453). Positions 462 to 470 (VSWQTLQLQ) match the 9aaTAD motif. A glycan (O-linked (GlcNAc) serine) is linked at Ser-491. The tract at residues 496 to 610 (SSSNTTLTPI…REACTCPYCK (115 aa)) is transactivation domain C (highly charged). The segment at 567–598 (LHGAGGDGIHDDTAGGEEGENSPDAQPQAGRR) is disordered. Residue Ser-612 is modified to Phosphoserine; alternate. O-linked (GlcNAc) serine; alternate glycosylation is present at Ser-612. A VZV IE62-binding region spans residues 619 to 785 (DPGKKKQHIC…QSINISGNGF (167 aa)). Residues 626–650 (HICHIQGCGKVYGKTSHLRAHLRWH) form a C2H2-type 1 zinc finger. A Phosphothreonine; alternate modification is found at Thr-640. Thr-640 carries an O-linked (GlcNAc) threonine; alternate glycan. O-linked (GlcNAc) serine; alternate glycosylation occurs at Ser-641. Ser-641 carries the post-translational modification Phosphoserine; by PKC/PRKCZ; alternate. Position 651 is a phosphothreonine; by PKC/PRKCZ (Thr-651). A C2H2-type 2 zinc finger spans residues 656–680 (FMCTWSYCGKRFTRSDELQRHKRTH). Thr-668 is modified (phosphothreonine). Ser-670 bears the Phosphoserine; by PKC/PRKCZ mark. Position 681 is a phosphothreonine; by PKC/PRKCZ (Thr-681). A C2H2-type 3 zinc finger spans residues 686–708 (FACPECPKRFMRSDHLSKHIKTH). Ser-698 and Ser-702 each carry phosphoserine; alternate. Residues Ser-698 and Ser-702 are each glycosylated (O-linked (GlcNAc) serine; alternate). Lys-703 bears the N6-acetyllysine mark. Positions 708 to 785 (HQNKKGGPGV…QSINISGNGF (78 aa)) are domain D. A Phosphothreonine; by MAPK1, MAPK3 and MAPK8 modification is found at Thr-739.

It belongs to the Sp1 C2H2-type zinc-finger protein family. As to quaternary structure, interacts with ATF7IP, ATF7IP2, BAHD1, POGZ, HCFC1, AATF and PHC2. Interacts with HLTF; the interaction may be required for basal transcriptional activity of HLTF. Interacts (deacetylated form) with EP300; the interaction enhances gene expression. Interacts with HDAC1 and JUN. Interacts with ELF1; the interaction is inhibited by glycosylation of SP1. Interaction with NFYA; the interaction is inhibited by glycosylation of SP1. Interacts with ATF7IP and TBP. Interacts with MEIS2 isoform 4 and PBX1 isoform PBX1a. Interacts with EGR1. Interacts with SMARCA4/BRG1. Interacts with RNF112 in an oxidative stress-regulated manner. Interacts with ZBTB7A; ZBTB7A prevents the binding to GC-rich motifs in promoters and represses the transcriptional activity of SP1. Interacts with DDX3X; this interaction potentiates SP1-induced CDKN1A/WAF1/CIP1 transcription. Interacts with MSX1; the interaction may inhibit MSX1 autoinactivation. (Microbial infection) Interacts with varicella-zoster virus IE62 protein. In terms of assembly, (Microbial infection) Interacts with SV40 VP2/3 proteins. Interacts with SV40 major capsid protein VP1; this interaction leads to a cooperativity between the 2 proteins in DNA binding. As to quaternary structure, (Microbial infection) Interacts with HIV-1 Vpr; the interaction is inhibited by SP1 O-glycosylation. In terms of processing, phosphorylated on multiple serine and threonine residues. Phosphorylation is coupled to ubiquitination, sumoylation and proteolytic processing. Phosphorylation on Ser-59 enhances proteolytic cleavage. Phosphorylation on Ser-7 enhances ubiquitination and protein degradation. Hyperphosphorylation on Ser-101 in response to DNA damage has no effect on transcriptional activity. MAPK1/MAPK3-mediated phosphorylation on Thr-453 and Thr-739 enhances VEGF transcription but, represses FGF2-triggered PDGFR-alpha transcription. Also implicated in the repression of RECK by ERBB2. Hyperphosphorylated on Thr-278 and Thr-739 during mitosis by MAPK8 shielding SP1 from degradation by the ubiquitin-dependent pathway. Phosphorylated in the zinc-finger domain by calmodulin-activated PKCzeta. Phosphorylation on Ser-641 by PKCzeta is critical for TSA-activated LHR gene expression through release of its repressor, p107. Phosphorylation on Thr-668, Ser-670 and Thr-681 is stimulated by angiotensin II via the AT1 receptor inducing increased binding to the PDGF-D promoter. This phosphorylation is increased in injured artey wall. Ser-59 and Thr-681 can both be dephosphorylated by PP2A during cell-cycle interphase. Dephosphorylation on Ser-59 leads to increased chromatin association during interphase and increases the transcriptional activity. On insulin stimulation, sequentially glycosylated and phosphorylated on several C-terminal serine and threonine residues. Acetylated. Acetylation/deacetylation events affect transcriptional activity. Deacetylation leads to an increase in the expression of the 12(s)-lipooxygenase gene through recruitment of p300 to the promoter. Deacetylated by HDAC6 which leads to increased expression of ENG and positive regulation of angiogenesis. Post-translationally, ubiquitinated. Ubiquitination occurs on the C-terminal proteolytically-cleaved peptide and is triggered by phosphorylation. In terms of processing, sumoylated with SUMO1. Sumoylation modulates proteolytic cleavage of the N-terminal repressor domain. Sumoylation levels are attenuated during tumorigenesis. Phosphorylation mediates SP1 desumoylation. Proteolytic cleavage in the N-terminal repressor domain is prevented by sumoylation. The C-terminal cleaved product is susceptible to degradation. Post-translationally, O-glycosylated; Contains 8 N-acetylglucosamine side chains. Levels are controlled by insulin and the SP1 phosphorylation states. Insulin-mediated O-glycosylation locates SP1 to the nucleus, where it is sequentially deglycosylated and phosphorylated. O-glycosylation affects transcriptional activity through disrupting the interaction with a number of transcription factors including ELF1 and NFYA. Also inhibits interaction with the HIV1 promoter. Inhibited by peroxisomome proliferator receptor gamma (PPARgamma). Up-regulated in adenocarcinomas of the stomach (at protein level). Isoform 3 is ubiquitously expressed at low levels.

The protein localises to the nucleus. It localises to the cytoplasm. Transcription factor that can activate or repress transcription in response to physiological and pathological stimuli. Binds with high affinity to GC-rich motifs and regulates the expression of a large number of genes involved in a variety of processes such as cell growth, apoptosis, differentiation and immune responses. Highly regulated by post-translational modifications (phosphorylations, sumoylation, proteolytic cleavage, glycosylation and acetylation). Also binds the PDGFR-alpha G-box promoter. May have a role in modulating the cellular response to DNA damage. Implicated in chromatin remodeling. Plays an essential role in the regulation of FE65 gene expression. In complex with ATF7IP, maintains telomerase activity in cancer cells by inducing TERT and TERC gene expression. Isoform 3 is a stronger activator of transcription than isoform 1. Positively regulates the transcription of the core clock component BMAL1. Plays a role in the recruitment of SMARCA4/BRG1 on the c-FOS promoter. Plays a role in protecting cells against oxidative stress following brain injury by regulating the expression of RNF112. This is Transcription factor Sp1 (SP1) from Homo sapiens (Human).